We begin with the raw amino-acid sequence, 412 residues long: DnaJ homolog subfamily A member 2 (412 aa).

A J domain is found at 8–70; the sequence is KLYDILGVPP…EKRELYDRYG (63 aa). Lys39 carries the N6-acetyllysine modification. Phosphoserine is present on residues Ser78 and Ser123. The CR-type zinc finger occupies 130–214; the sequence is GKTTKLQLSK…CEGKKVIKEV (85 aa). Lys134 participates in a covalent cross-link: Glycyl lysine isopeptide (Lys-Gly) (interchain with G-Cter in SUMO2). 2 residues coordinate Zn(2+): Cys143 and Cys146. One copy of the CXXCXGXG motif repeat lies at 143 to 150; the sequence is CSACSGQG. At Lys152 the chain carries N6-acetyllysine. Zn(2+) contacts are provided by Cys159, Cys162, Cys186, Cys189, Cys202, and Cys205. 3 CXXCXGXG motif repeats span residues 159-166, 186-193, and 202-209; these read CSACRGRG, CSDCNGEG, and CKKCEGKK. Residues 365–412 form a disordered region; that stretch reads IGETEEVELQEFDSTRGSGGGQRREAYNDSSDEESSSHHGPGVQCAHQ. The residue at position 391 (Tyr391) is a Phosphotyrosine. Ser394 and Ser395 each carry phosphoserine. At Cys409 the chain carries Cysteine methyl ester. Cys409 is lipidated: S-farnesyl cysteine. Residues 410–412 constitute a propeptide, removed in mature form; it reads AHQ.

Its subcellular location is the membrane. In terms of biological role, co-chaperone of Hsc70. Stimulates ATP hydrolysis and the folding of unfolded proteins mediated by HSPA1A/B (in vitro). This Homo sapiens (Human) protein is DnaJ homolog subfamily A member 2 (DNAJA2).